A 176-amino-acid chain; its full sequence is MVKEIARTIEIPEGVSVSLSQDVFTAKGPKGTVERTFWYPGIKIEVREGEVVVDAESSRKEQKAMVGTFASHLKNLIIGVSEGFECKMNIVYAHFPMQVKVEGKTLVIGNFLGEKKPRIAKILGETKVKVSGNEIVVSGINKEDVGQTAANIEQKTKIKRFDPRIFQDGIYIVQKA.

It belongs to the universal ribosomal protein uL6 family. In terms of assembly, part of the 50S ribosomal subunit.

In terms of biological role, this protein binds to the 23S rRNA, and is important in its secondary structure. It is located near the subunit interface in the base of the L7/L12 stalk, and near the tRNA binding site of the peptidyltransferase center. The polypeptide is Large ribosomal subunit protein uL6 (Methanosarcina mazei (strain ATCC BAA-159 / DSM 3647 / Goe1 / Go1 / JCM 11833 / OCM 88) (Methanosarcina frisia)).